The sequence spans 481 residues: Polygalacturonase QRT3 (481 aa).

The first 27 residues, 1–27 (MELRKSQVAMPVFLAIMSLMVSQVVFA), serve as a signal peptide directing secretion. PbH1 repeat units follow at residues 203–226 (SLRTSIDNCYITRFGDTNGILVKS), 261–282 (GNDNAVTDTVIFSARIGVMVSG), and 356–377 (IRGVSIVDNMFSGSGHGVQIVQ). N-linked (GlcNAc...) asparagine glycans are attached at residues Asn415 and Asn455.

Belongs to the glycosyl hydrolase 28 family. Expressed in the tapetum cells in the anthers and in the ovules of open flowers.

Its subcellular location is the secreted. The protein localises to the cell wall. It catalyses the reaction (1,4-alpha-D-galacturonosyl)n+m + H2O = (1,4-alpha-D-galacturonosyl)n + (1,4-alpha-D-galacturonosyl)m.. Polygalacturonase required for degrading the pollen mother cell wall during microspore development. In Arabidopsis thaliana (Mouse-ear cress), this protein is Polygalacturonase QRT3 (QRT3).